The following is a 943-amino-acid chain: Receptor-like protein 35 (943 aa).

Residues 1–31 (MTGSWNPTSIIIPVTLSFLLSFIHNFADVVA) form the signal peptide. Residues 32–897 (APTRHLCLPE…EEEDEEEISW (866 aa)) lie on the Extracellular side of the membrane. Asparagine 67, asparagine 82, asparagine 118, asparagine 147, asparagine 171, asparagine 195, asparagine 219, and asparagine 222 each carry an N-linked (GlcNAc...) asparagine glycan. 11 LRR repeats span residues 124–148 (LQNLRVLDLTQNDLDGEIPSSIGNL), 150–171 (HLTSLHLSYNQFLGLIPSSIEN), 172–196 (LSRLTSLHLSSNQFSGQIPSSIGNL), 198–220 (HLTSLELSSNQFSGQIPSSIGNL), 222–244 (NLTFLSLPSNDFFGQIPSSIGNL), 245–267 (ARLTYLYLSYNNFVGEIPSSFGN), 268–292 (LNQLIVLQVDSNKLSGNVPISLLNL), 293–317 (TRLSALLLSHNQFTGTIPNNISLLS), 319–340 (LMDFEASNNAFTGTLPSSLFNI), 341–364 (PPLIRLDLSDNQLNGTLHFGNISS), and 366–389 (SNLQYLIIGSNNFIGTIPRSLSRF). Asparagine 291 and asparagine 312 each carry an N-linked (GlcNAc...) asparagine glycan. 2 N-linked (GlcNAc...) asparagine glycosylation sites follow: asparagine 354 and asparagine 361. The LRR 12; degenerate repeat unit spans residues 390–414 (VNLTLFDLSHLNTQCRPVDFSIFSH). N-linked (GlcNAc...) asparagine glycosylation is present at asparagine 391. 16 LRR repeats span residues 415–439 (LKSLDDLRLSYLTTTTIDLNDILPY), 440–463 (FKTLRSLDISGNLVSATNKSSVSS), 467–490 (SQSIQSLYLSGCGITDFPEILRTQ), 491–514 (HELGFLDVSNNKIKGQVPGWLWTL), 515–537 (PNLFYLNLSNNTFISFESSSKKH), 544–568 (KPSMIHLFASNNNFTGKIPSFICGL), 569–592 (RSLNTLDLSENNYNGSIPRCMEKL), 593–617 (KSTLFVLNLRQNNLSGGLPKHIFES), 619–639 (RSLDVGHNLLVGKLPRSLIRF), 640–665 (SNLEVLNVESNRINDTFPFWLSSLSK), 667–685 (QVLVLRSNAFHGPIHEATF), 686–709 (PELRIIDISHNHFNGTLPTEYFVK), 753–777 (LTIYTALDFSGNKFEGEIPKSIGLL), 778–801 (KELLVLNLSNNAFGGHIPSSMGNL), 802–825 (TALESLDVSQNKLTGEIPQELGDL), and 827–850 (FLAYMNFSHNQLAGLVPGGTQFRR). A glycan (N-linked (GlcNAc...) asparagine) is linked at asparagine 457. N-linked (GlcNAc...) asparagine glycans are attached at residues asparagine 521, asparagine 524, asparagine 556, asparagine 582, and asparagine 605. Asparagine 653 carries an N-linked (GlcNAc...) asparagine glycan. Residue asparagine 699 is glycosylated (N-linked (GlcNAc...) asparagine). Residues asparagine 784 and asparagine 800 are each glycosylated (N-linked (GlcNAc...) asparagine). Residues asparagine 832, asparagine 852, and asparagine 882 are each glycosylated (N-linked (GlcNAc...) asparagine). A helical transmembrane segment spans residues 898–918 (IAAAIGFIPGIVFGLTIGYIL). Residues 919 to 943 (VSYKPEWFMNPFGRNNRRRRNTTTH) lie on the Cytoplasmic side of the membrane.

The protein belongs to the RLP family.

It is found in the cell membrane. This chain is Receptor-like protein 35, found in Arabidopsis thaliana (Mouse-ear cress).